Here is a 129-residue protein sequence, read N- to C-terminus: Small ribosomal subunit protein uS11 (129 aa).

It belongs to the universal ribosomal protein uS11 family. As to quaternary structure, part of the 30S ribosomal subunit. Interacts with proteins S7 and S18. Binds to IF-3.

In terms of biological role, located on the platform of the 30S subunit, it bridges several disparate RNA helices of the 16S rRNA. Forms part of the Shine-Dalgarno cleft in the 70S ribosome. In Bacillus cytotoxicus (strain DSM 22905 / CIP 110041 / 391-98 / NVH 391-98), this protein is Small ribosomal subunit protein uS11.